The primary structure comprises 172 residues: Zinc finger protein 580 (172 aa).

Positions 1-93 are disordered; that stretch reads MLLLPPRPPH…GEPGPRKGYS (93 aa). The span at 19–30 shows a compositional bias: pro residues; the sequence is MDPPPPKAPPFP. Lys-31 is covalently cross-linked (Glycyl lysine isopeptide (Lys-Gly) (interchain with G-Cter in SUMO2)). A compositionally biased stretch (low complexity) spans 31–44; the sequence is KAEGPSSTPSSAAG. The span at 75–86 shows a compositional bias: pro residues; the sequence is GPPQREAPPGEP. The C2H2-type 1 zinc finger occupies 92–114; the sequence is YSCPECARVFASPLRLQSHRVSH. Lys-118 is covalently cross-linked (Glycyl lysine isopeptide (Lys-Gly) (interchain with G-Cter in SUMO2)). 2 consecutive C2H2-type zinc fingers follow at residues 120–142 and 150–172; these read FTCG…RATH and HTCP…VRLH.

Interacts with SMAD2. As to expression, expressed in endothelial cells.

Its subcellular location is the nucleus. Functionally, involved in the regulation of endothelial cell proliferation and migration. Mediates H(2)O(2)-induced leukocyte chemotaxis by elevating interleukin-8 production and may play a role in inflammation. May be involved in transcriptional regulation. This chain is Zinc finger protein 580 (ZNF580), found in Homo sapiens (Human).